The chain runs to 367 residues: Protein RecA (367 aa).

73 to 80 (GPESSGKT) contributes to the ATP binding site. Residues 345 to 367 (DEPVAKKASAKESKEAKELKEVE) are disordered.

This sequence belongs to the RecA family.

It is found in the cytoplasm. Functionally, can catalyze the hydrolysis of ATP in the presence of single-stranded DNA, the ATP-dependent uptake of single-stranded DNA by duplex DNA, and the ATP-dependent hybridization of homologous single-stranded DNAs. It interacts with LexA causing its activation and leading to its autocatalytic cleavage. The sequence is that of Protein RecA from Janthinobacterium sp. (strain Marseille) (Minibacterium massiliensis).